A 217-amino-acid chain; its full sequence is Uracil-DNA glycosylase (217 aa).

Asp62 (proton acceptor) is an active-site residue.

The protein belongs to the uracil-DNA glycosylase (UDG) superfamily. UNG family.

The protein resides in the cytoplasm. It carries out the reaction Hydrolyzes single-stranded DNA or mismatched double-stranded DNA and polynucleotides, releasing free uracil.. In terms of biological role, excises uracil residues from the DNA which can arise as a result of misincorporation of dUMP residues by DNA polymerase or due to deamination of cytosine. This Streptococcus sanguinis (strain SK36) protein is Uracil-DNA glycosylase.